We begin with the raw amino-acid sequence, 487 residues long: b(0,+)-type amino acid transporter 1 (487 aa).

A disordered region spans residues Met-1–Lys-22. The Cytoplasmic segment spans residues Met-1 to Gly-31. Residue Ser-18 is modified to Phosphoserine. The helical transmembrane segment at Leu-32–Val-55 threads the bilayer. Ile-43–Gly-47 contacts L-arginine. The Extracellular portion of the chain corresponds to Leu-56 to Val-62. A helical membrane pass occupies residues Gly-63–Ala-84. Residues Glu-85–Tyr-110 lie on the Cytoplasmic side of the membrane. The chain crosses the membrane as a helical span at residues Leu-111 to Ala-137. Topologically, residues Thr-138 to Pro-147 are extracellular. 2 helical membrane-spanning segments follow: residues Lys-148–Ser-169 and Val-170–Ile-193. Residues Ser-194–Ser-217 lie on the Extracellular side of the membrane. A helical transmembrane segment spans residues Val-218–Leu-238. Asp-233 is a binding site for L-arginine. The Cytoplasmic portion of the chain corresponds to Asn-239 to Asn-251. A helical transmembrane segment spans residues Leu-252 to Tyr-274. Residues Phe-275 to Ser-302 are Extracellular-facing. A helical transmembrane segment spans residues Trp-303–Gly-325. Over Arg-326–Pro-351 the chain is Cytoplasmic. 2 consecutive transmembrane segments (helical) span residues Ala-352–Asp-370 and Ile-371–Leu-391. Residues Gly-392–Pro-410 are Cytoplasmic-facing. The helical transmembrane segment at Ile-411–Thr-431 threads the bilayer. The Extracellular segment spans residues Asn-432–Ala-434. A helical membrane pass occupies residues Trp-435 to Phe-450. Topologically, residues Tyr-451–Lys-487 are cytoplasmic.

This sequence belongs to the amino acid-polyamine-organocation (APC) superfamily. As to quaternary structure, disulfide-linked heterodimer composed of the catalytic light chain subunit SLC7A9 and the heavy chain subunit. The heterodimer is the minimal functional unit. Assembles in heterotetramers (dimers of heterodimers) and higher order oligomers. Interacts with CAV1. In terms of tissue distribution, kidney and small intestine.

It localises to the apical cell membrane. It carries out the reaction L-leucine(out) + L-arginine(in) = L-leucine(in) + L-arginine(out). It catalyses the reaction L-histidine(out) + L-arginine(in) = L-histidine(in) + L-arginine(out). The enzyme catalyses L-arginine(in) + L-phenylalanine(out) = L-arginine(out) + L-phenylalanine(in). The catalysed reaction is L-cysteine(out) + L-arginine(in) = L-cysteine(in) + L-arginine(out). It carries out the reaction L-cystine(out) + L-arginine(in) = L-cystine(in) + L-arginine(out). It catalyses the reaction L-lysine(out) + L-arginine(in) = L-lysine(in) + L-arginine(out). Its function is as follows. Mediates the electrogenic exchange between cationic amino acids and neutral amino acids, with a stoichiometry of 1:1. Has system b(0,+)-like activity with high affinity for extracellular cationic amino acids and L-cystine and lower affinity for intracellular neutral amino acids. Substrate exchange is driven by high concentration of intracellular neutral amino acids and the intracellular reduction of L-cystine to L-cysteine. Required for reabsorption of L-cystine and dibasic amino acids across the brush border membrane in renal proximal tubules. The chain is b(0,+)-type amino acid transporter 1 from Oryctolagus cuniculus (Rabbit).